The chain runs to 431 residues: 3-phosphoshikimate 1-carboxyvinyltransferase (431 aa).

3-phosphoshikimate contacts are provided by lysine 22, serine 23, and arginine 27. Lysine 22 is a phosphoenolpyruvate binding site. 2 residues coordinate phosphoenolpyruvate: glycine 94 and arginine 122. Residues serine 168, serine 169, glutamine 170, serine 196, aspartate 315, and lysine 342 each coordinate 3-phosphoshikimate. Glutamine 170 contacts phosphoenolpyruvate. The Proton acceptor role is filled by aspartate 315. Phosphoenolpyruvate-binding residues include arginine 346, arginine 390, and lysine 414.

This sequence belongs to the EPSP synthase family. As to quaternary structure, monomer.

The protein resides in the cytoplasm. It catalyses the reaction 3-phosphoshikimate + phosphoenolpyruvate = 5-O-(1-carboxyvinyl)-3-phosphoshikimate + phosphate. The protein operates within metabolic intermediate biosynthesis; chorismate biosynthesis; chorismate from D-erythrose 4-phosphate and phosphoenolpyruvate: step 6/7. Catalyzes the transfer of the enolpyruvyl moiety of phosphoenolpyruvate (PEP) to the 5-hydroxyl of shikimate-3-phosphate (S3P) to produce enolpyruvyl shikimate-3-phosphate and inorganic phosphate. In Nitrosomonas europaea (strain ATCC 19718 / CIP 103999 / KCTC 2705 / NBRC 14298), this protein is 3-phosphoshikimate 1-carboxyvinyltransferase.